The following is a 231-amino-acid chain: MTQDELKRLVGEAAARYVTENVPQGAVIGVGTGSTANCFIDALAAVKDRYRGAVSSSVATTERLKSHGIKVFDLNEIESLQVYVDGADEIDGSGAMIKGGGGALTREKIVASVAETFVCIADASKRVAVLGQFPLPVEVVPMARTAIGRRLAALGGVPVLRVKQDGAPYVTDNGNEILDVKGLRIDDPRALEAAINGWPGVVTVGLFAQRGADLCLLGTERGVETLRYAAH.

Residues 32–35, 85–88, and 98–101 each bind substrate; these read TGST, DGAD, and KGGG. The Proton acceptor role is filled by Glu-107. Position 125 (Lys-125) interacts with substrate.

This sequence belongs to the ribose 5-phosphate isomerase family. In terms of assembly, homodimer.

It catalyses the reaction aldehydo-D-ribose 5-phosphate = D-ribulose 5-phosphate. It functions in the pathway carbohydrate degradation; pentose phosphate pathway; D-ribose 5-phosphate from D-ribulose 5-phosphate (non-oxidative stage): step 1/1. Functionally, catalyzes the reversible conversion of ribose-5-phosphate to ribulose 5-phosphate. The polypeptide is Ribose-5-phosphate isomerase A (Burkholderia mallei (strain NCTC 10247)).